The chain runs to 481 residues: Mediator of RNA polymerase II transcription subunit 3 (481 aa).

Residues 79-107 (QEKFQMIRSKVLGLTERLQELSNDFEELQ) adopt a coiled-coil conformation. Disordered stretches follow at residues 140 to 261 (AGAS…MGTP) and 415 to 463 (NTKG…KSAY). Residues 148–203 (TPTPAAATPTTAPTPGAGTKKAAKTAPTPTATATIGTPSNNAPTPATTATTPGTQA) show a composition bias toward low complexity. Residues 204 to 213 (KKPRKPRQTK) show a composition bias toward basic residues. The span at 214 to 248 (KQQQAAAAAAAVAQAQAQAQAQAQNQNQNNMQNKN) shows a compositional bias: low complexity. Polar residues predominate over residues 249 to 259 (ISNPGMNSNMG). Over residues 428-458 (MDQNQNQNQSQNQSQNQNQSMNMNMNNDSNN) the composition is skewed to low complexity.

It belongs to the Mediator complex subunit 3 family. As to quaternary structure, component of the Mediator complex.

It is found in the nucleus. In terms of biological role, component of the Mediator complex, a coactivator involved in regulated gene transcription of nearly all RNA polymerase II-dependent genes. Mediator functions as a bridge to convey information from gene-specific regulatory proteins to the basal RNA polymerase II transcription machinery. Mediator is recruited to promoters by direct interactions with regulatory proteins and serves as a scaffold for the assembly of a functional preinitiation complex with RNA polymerase II and the general transcription factors. The sequence is that of Mediator of RNA polymerase II transcription subunit 3 (PGD1) from Candida glabrata (strain ATCC 2001 / BCRC 20586 / JCM 3761 / NBRC 0622 / NRRL Y-65 / CBS 138) (Yeast).